The following is a 419-amino-acid chain: UDP-N-acetylglucosamine 1-carboxyvinyltransferase (419 aa).

Residue 22–23 (KN) coordinates phosphoenolpyruvate. Arg-91 serves as a coordination point for UDP-N-acetyl-alpha-D-glucosamine. The active-site Proton donor is the Cys-115. Cys-115 carries the 2-(S-cysteinyl)pyruvic acid O-phosphothioketal modification. UDP-N-acetyl-alpha-D-glucosamine contacts are provided by residues 120-124 (RPVDL), 160-163 (KVSV), Asp-305, and Ile-327.

Belongs to the EPSP synthase family. MurA subfamily.

It is found in the cytoplasm. It catalyses the reaction phosphoenolpyruvate + UDP-N-acetyl-alpha-D-glucosamine = UDP-N-acetyl-3-O-(1-carboxyvinyl)-alpha-D-glucosamine + phosphate. The protein operates within cell wall biogenesis; peptidoglycan biosynthesis. Its activity is regulated as follows. In vitro inhibited by covalent binding of fosfomycin and the fungal product terreic acid in the presence of substrate UDP-N-acetylglucosamine, with an inactivation rate constant of 130 M(-1)sec(-1) for terreic acid. Its function is as follows. Cell wall formation. Adds enolpyruvyl to UDP-N-acetylglucosamine. Target for the antibiotic fosfomycin. In Enterobacter cloacae subsp. cloacae (strain ATCC 13047 / DSM 30054 / NBRC 13535 / NCTC 10005 / WDCM 00083 / NCDC 279-56), this protein is UDP-N-acetylglucosamine 1-carboxyvinyltransferase.